We begin with the raw amino-acid sequence, 256 residues long: DNA repair protein RecO (256 aa).

The protein belongs to the RecO family.

In terms of biological role, involved in DNA repair and RecF pathway recombination. The polypeptide is DNA repair protein RecO (Rhizobium etli (strain CIAT 652)).